The chain runs to 597 residues: Protein GRISEA (597 aa).

Residues 1–41 (MPIINGQKMACGPCIRGHRSTKCNHYNERVMVPVRKPGRPL) constitute a DNA-binding region (copper-fist). Zn(2+) is bound by residues Cys-11, Cys-14, Cys-23, and His-25. Disordered regions lie at residues 70 to 115 (PAGT…ASRR), 233 to 352 (AFVD…PGFG), 407 to 428 (SRPP…NGNN), and 467 to 541 (SPNS…SPAL). Residues 92-103 (SPASRTSSNRVT) show a composition bias toward polar residues. Residues 104–115 (KSGSGSKSASRR) show a composition bias toward low complexity. Residues 269-281 (GGSGGGGCCGGGK) are compositionally biased toward gly residues. Over residues 287–314 (QAPPPVPAPLPTPPQQQMPNIMPPPQPQ) the composition is skewed to pro residues. Low complexity predominate over residues 469-495 (NSSHGNSGSADSSANASPSANPLNLAS). Residues 521–530 (ANESDGSSNA) are compositionally biased toward polar residues.

The protein localises to the nucleus. In terms of biological role, copper-sensing transcription factor that regulates copper uptake by transactivation of Ctr3, a high affinity copper permease. Binds to the palindromic UAS sequence 5'-TGTTGCTCANNNNAGAGCAACT-3'. Also transactivates Sod2, a mitochondrial manganese superoxide dismutase through the palindromic UAS sequence 5'-GTTTGCTCA-3' with 352 bp separating the two inverted repeats. Loss of function indirectly leads to rearrangement of mitochondrial DNA associated with senescence in wild-type strains. This is Protein GRISEA from Podospora anserina (Pleurage anserina).